Here is a 1149-residue protein sequence, read N- to C-terminus: MGKRDIPSPNENIAPRTIGMRDVDLTAAPAKKAKLDTGERIAVSGRVASVKLTNFMCHANLQIDFKTAQNNCFYIGGPNGSGKSALFAAINLGLGGRGSDNDRGNTVKSYIKDGTTQSKITITLTNAGLNAHPDFDDLISIERTINQASSTYIMKSVKVTSSDNHVERIVSRKKADVDRIVSRFSIHLSNPAFWMSQDRSRSFLANFKPANVYKLYLESTNLENIRLSYIRFADALDECFALIQLKAGEILNEQKKLKRMQEQRDLQAKLDQDRALVASFCWKLLFCKVRDYNDQIELTLKKQEAQKTLQDETKKEYAKNRAARTEVEKKIQEFRDEVEVQDAEIAEAREDLDAKKRKVLEFEEKIRECEQSIRKKTSEKKYMERTIVNAKNEVRILLEKQGNQDLTKRLTKVENDYKDISQQRENMELGGESAKLREKLDTVITDYKRKEEEKYTIQRDINQLRRKIEQDMETMRRSRATKKDAINKFGSHMAEILMEINRSKSRFQTVPKGPLGKYITLIDPKWAFTVEECIGNLANNFLCSSHLDAEILRNIFQSLRIPAQDRPTIIVAKCNGRAYTNLHEPSSDFKSIYRVLKFSDPDVHNVIIDKSNCEQFILIEDKTEAMELMGSNYPPQNAVKAYTLDGSQAYANGPNSQYRFYSGRGGHARGTFGNDQGDVDEGALARLIEDTKSEAMRLETQDLRKQDHELKVIYNERDQTKAAIDEFDRKLSNLRSQELQKERQAKDLRAELAQTANEDQVENLNESIEEMQKKIPLIEDEVKDILKNVADITADMAPVIQERKEAEHTLAEIQKETRDFASKSQKLQNELSKYDDAGEILKIRLDKVKADEGVFFHTEAKLKSERDDAMEMVENDKKNHPMPPGETDPPDLSSFPSTTEAQRKIEEMQKAVDRATVGCDTTITLECVKDFKDKLKRLKYLCRMIEDVLIELKNLHAARVKAYPSLKKFTELKVCNKFQELLAVRGHFIGGLEFDHEKETLNVNVQSSKEKDAMAGRRPEVLEVEEVDEHSYDDDSDDSTGPRRKKSKKSGQKKKRVRDLKGLSGGERSFVTAALVMSLWEVMEQPFRMMDEFDVFMDMMNRKLVMDLLVELATKKFPHNQFIFFTPQGIKELNMVDGLQVFEMNRVRD.

ATP is bound at residue 77 to 84 (GPNGSGKS). Positions 309–460 (LQDETKKEYA…EEEKYTIQRD (152 aa)) form a coiled coil. The segment at 461-687 (INQLRRKIEQ…DVDEGALARL (227 aa)) is flexible hinge. Residues 714-920 (YNERDQTKAA…AVDRATVGCD (207 aa)) adopt a coiled-coil conformation. 2 disordered regions span residues 875–900 (NDKKNHPMPPGETDPPDLSSFPSTTE) and 1026–1060 (EVDEHSYDDDSDDSTGPRRKKSKKSGQKKKRVRDL). Positions 1026-1038 (EVDEHSYDDDSDD) are enriched in acidic residues. Over residues 1042–1058 (PRRKKSKKSGQKKKRVR) the composition is skewed to basic residues.

It belongs to the SMC family. SMC6 subfamily. As to quaternary structure, interacts with smc-5. Expressed in the germline (at protein level).

It is found in the nucleus. It localises to the chromosome. Functionally, core component of the smc-5/smc-6 complex. Involved in DNA double-strand break repair by promoting sister-chromatid homologous recombination during meiosis. Also plays a role in the DNA damage repair of ultraviolet (UV) radiation-induced DNA lesions. Promotes efficient DNA replication. The protein is Structural maintenance of chromosomes protein 6 homolog smc-6 of Caenorhabditis elegans.